Here is a 479-residue protein sequence, read N- to C-terminus: Adenylate kinase 8 (479 aa).

2 adenylate kinase regions span residues 58–258 and 269–471; these read PRVV…TYVQ and PKVL…SGII. 67 to 72 contributes to the ATP binding site; it reads ASGKTT. An NMP 1 region spans residues 87-113; it reads TKENLLEREFSLLSLEAKKHYQVYKRV. Residues 140-143, Gln147, and Arg203 each bind AMP; that span reads GIPE. The interval 177–206 is LID 1; that stretch reads GKRIDPVTGEIYHTTFDWPPELEIQNRLIQ. 278–283 provides a ligand contact to ATP; it reads GCGKKL. An NMP 2 region spans residues 298-327; sequence SCGQLLKEAMAAESSLGDLIEPFFEKRMTV. AMP contacts are provided by residues 325–327, 354–357, and Gln361; these read MTV and GFPR. The tract at residues 391–424 is LID 2; that stretch reads LRRTDPVTGERFHLMYKPPPTIEVQARLLQNPKD. Arg392 provides a ligand contact to ATP.

The protein belongs to the adenylate kinase family. In terms of assembly, interacts with CFAP45 and CFAP52; CFAP45 and AK8 dimerization may create a cavity at the interface of the dimer that can accommodate AMP.

Its subcellular location is the cytoplasm. It localises to the cytosol. It is found in the cytoskeleton. The protein localises to the cilium axoneme. The catalysed reaction is AMP + ATP = 2 ADP. It carries out the reaction a 2'-deoxyribonucleoside 5'-diphosphate + ATP = a 2'-deoxyribonucleoside 5'-triphosphate + ADP. It catalyses the reaction a ribonucleoside 5'-diphosphate + ATP = a ribonucleoside 5'-triphosphate + ADP. Its function is as follows. Nucleoside monophosphate (NMP) kinase that catalyzes the reversible transfer of the terminal phosphate group between nucleoside triphosphates and monophosphates. Has highest activity toward AMP, and weaker activity toward dAMP, CMP and dCMP. Also displays broad nucleoside diphosphate kinase activity. This Rattus norvegicus (Rat) protein is Adenylate kinase 8 (Ak8).